The primary structure comprises 230 residues: Osmotin-like protein PR-5x (230 aa).

The N-terminal stretch at 1–25 is a signal peptide; it reads MYTNMGYLTSSFIFFFLALVTYTYA. Disulfide bonds link cysteine 34–cysteine 229, cysteine 76–cysteine 86, cysteine 91–cysteine 97, cysteine 145–cysteine 217, cysteine 150–cysteine 200, cysteine 158–cysteine 168, cysteine 172–cysteine 181, and cysteine 182–cysteine 187.

This sequence belongs to the thaumatin family.

Its subcellular location is the secreted. It is found in the vacuole. It carries out the reaction Endohydrolysis of (1-&gt;3)- or (1-&gt;4)-linkages in beta-D-glucans when the glucose residue whose reducing group is involved in the linkage to be hydrolyzed is itself substituted at C-3.. In terms of biological role, antifungal protein. May bind to beta-glucans and have beta-1,3-D-glucanase activity. The sequence is that of Osmotin-like protein PR-5x from Solanum lycopersicum (Tomato).